A 237-amino-acid polypeptide reads, in one-letter code: Proteasome subunit alpha type-5-A (237 aa).

The residue at position 1 (Met-1) is an N-acetylmethionine. Residues Lys-43 and Lys-66 each participate in a glycyl lysine isopeptide (Lys-Gly) (interchain with G-Cter in ubiquitin) cross-link.

The protein belongs to the peptidase T1A family. Component of the 20S core complex of the 26S proteasome. The 26S proteasome is composed of a core protease (CP), known as the 20S proteasome, capped at one or both ends by the 19S regulatory particle (RP/PA700). The 20S proteasome core is composed of 28 subunits that are arranged in four stacked rings, resulting in a barrel-shaped structure. The two end rings are each formed by seven alpha subunits, and the two central rings are each formed by seven beta subunits. The catalytic chamber with the active sites is on the inside of the barrel.

Its subcellular location is the cytoplasm. The protein resides in the nucleus. Functionally, the proteasome is a multicatalytic proteinase complex which is characterized by its ability to cleave peptides with Arg, Phe, Tyr, Leu, and Glu adjacent to the leaving group at neutral or slightly basic pH. The proteasome has an ATP-dependent proteolytic activity. In Arabidopsis thaliana (Mouse-ear cress), this protein is Proteasome subunit alpha type-5-A (PAE1).